Here is a 109-residue protein sequence, read N- to C-terminus: Nascent polypeptide-associated complex protein (109 aa).

The 68-residue stretch at 3 to 70 folds into the NAC-A/B domain; it reads PMNPKQMKKM…YEVVKRPPKI (68 aa).

The protein belongs to the NAC-alpha family. As to quaternary structure, homodimer. Interacts with the ribosome. Binds ribosomal RNA.

In terms of biological role, contacts the emerging nascent chain on the ribosome. The protein is Nascent polypeptide-associated complex protein of Archaeoglobus fulgidus (strain ATCC 49558 / DSM 4304 / JCM 9628 / NBRC 100126 / VC-16).